The sequence spans 358 residues: Dynein axonemal assembly factor 10 (358 aa).

WD repeat units follow at residues 64–106 (EKPK…TPVY), 116–155 (NCIDGVGGVGIGEGAPEIVTGSRDGTVKVWDPRQKDTPVA), 163–206 (ETKR…VRWE), 208–250 (NIKN…PSKG), 258–298 (AHKS…QRSR), and 320–358 (LSTQPISSMDWSPDKKGLCVCTSFDQTVRVLIVTKLNKL).

As to quaternary structure, interacts with PIH1D1; the interaction associates DNAAF10 with the R2TP complex. Interacts with several dynein axonemal assembly factors.

It localises to the dynein axonemal particle. Its function is as follows. Key assembly factor specifically required for the stability of axonemal dynein heavy chains in cytoplasm. The sequence is that of Dynein axonemal assembly factor 10 (dnaaf10) from Xenopus tropicalis (Western clawed frog).